Consider the following 270-residue polypeptide: Plasmanylethanolamine desaturase 1 (270 aa).

3 helical membrane-spanning segments follow: residues 47-67 (WCSVILCFSLIAHNLVHLLLL), 74-94 (PLVILGVVAGALIADFLSGLV), and 161-181 (ALEQLYPWECFVFCLIIFGTF). The Histidine box-1 motif lies at 186 to 190 (HKWSH). Residues 213–217 (HHRIH) carry the Histidine box-2 motif.

The protein belongs to the fatty acid desaturase CarF family.

Its subcellular location is the endoplasmic reticulum membrane. It catalyses the reaction a 1-(1,2-saturated alkyl)-2-acyl-sn-glycero-3-phosphoethanolamine + 2 Fe(II)-[cytochrome b5] + O2 + 2 H(+) = a 1-O-(1Z-alkenyl)-2-acyl-sn-glycero-3-phosphoethanolamine + 2 Fe(III)-[cytochrome b5] + 2 H2O. It carries out the reaction a 1-O-hexadecyl-2-acyl-sn-glycero-3-phosphoethanolamine + 2 Fe(II)-[cytochrome b5] + O2 + 2 H(+) = a 1-O-(1Z-hexadecenyl)-2-acyl-sn-glycero-3-phosphoethanolamine + 2 Fe(III)-[cytochrome b5] + 2 H2O. The catalysed reaction is a 1-O-octadecyl-2-acyl-sn-glycero-3-phosphoethanolamine + 2 Fe(II)-[cytochrome b5] + O2 + 2 H(+) = a 1-O-(1Z-octadecenyl)-2-acyl-sn-glycero-3-phosphoethanolamine + 2 Fe(III)-[cytochrome b5] + 2 H2O. The enzyme catalyses a 1-O-(9Z-octadecenyl)-2-acyl-sn-glycero-3-phosphoethanolamine + 2 Fe(II)-[cytochrome b5] + O2 + 2 H(+) = a 1-O-(1Z,9Z-octadecadienyl)-2-acyl-sn-glycero-3-phosphoethanolamine + 2 Fe(III)-[cytochrome b5] + 2 H2O. The protein operates within lipid metabolism; fatty acid metabolism. In terms of biological role, plasmanylethanolamine desaturase involved in plasmalogen biogenesis in the endoplasmic reticulum membrane. Plasmalogens are glycerophospholipids with a hydrocarbon chain linked by a vinyl ether bond at the glycerol sn-1 position, and are involved in antioxidative and signaling mechanisms. This Homo sapiens (Human) protein is Plasmanylethanolamine desaturase 1.